The following is a 79-amino-acid chain: Small ribosomal subunit protein uS17 (79 aa).

This sequence belongs to the universal ribosomal protein uS17 family. As to quaternary structure, part of the 30S ribosomal subunit.

One of the primary rRNA binding proteins, it binds specifically to the 5'-end of 16S ribosomal RNA. This chain is Small ribosomal subunit protein uS17, found in Rhizobium etli (strain CIAT 652).